The sequence spans 155 residues: uncharacterized protein (155 aa).

A signal peptide spans 1–30 (MTYNTNTSLSSYAGLSAFALSVFCILWGTA).

This is an uncharacterized protein from Treponema pallidum (strain Nichols).